We begin with the raw amino-acid sequence, 354 residues long: Muscleblind-like protein 3 (354 aa).

4 consecutive C3H1-type zinc fingers follow at residues 14-42, 48-74, 174-202, and 210-236; these read WLTL…HPPR, NGRV…HPPP, SDKL…HPTD, and DNTV…HPPA.

The protein belongs to the muscleblind family. Highly expressed in the placenta.

The protein localises to the nucleus. Its subcellular location is the cytoplasm. Functionally, mediates pre-mRNA alternative splicing regulation. Acts either as activator or repressor of splicing on specific pre-mRNA targets. Inhibits cardiac troponin-T (TNNT2) pre-mRNA exon inclusion but induces insulin receptor (IR) pre-mRNA exon inclusion in muscle. Antagonizes the alternative splicing activity pattern of CELF proteins. May play a role in myotonic dystrophy pathophysiology (DM). Could inhibit terminal muscle differentiation, acting at approximately the time of myogenin induction. This is Muscleblind-like protein 3 (MBNL3) from Homo sapiens (Human).